The primary structure comprises 199 residues: dITP/XTP pyrophosphatase (199 aa).

7–12 contacts substrate; sequence SNNRGK. Residues Asp-39 and Asp-68 each coordinate Mg(2+). Asp-68 serves as the catalytic Proton acceptor. Residues Ala-69, 154 to 157, Lys-177, and 182 to 183 each bind substrate; these read FGFD and HR.

It belongs to the HAM1 NTPase family. As to quaternary structure, homodimer. Mg(2+) serves as cofactor.

It carries out the reaction XTP + H2O = XMP + diphosphate + H(+). The enzyme catalyses dITP + H2O = dIMP + diphosphate + H(+). The catalysed reaction is ITP + H2O = IMP + diphosphate + H(+). Its function is as follows. Pyrophosphatase that catalyzes the hydrolysis of nucleoside triphosphates to their monophosphate derivatives, with a high preference for the non-canonical purine nucleotides XTP (xanthosine triphosphate), dITP (deoxyinosine triphosphate) and ITP. Seems to function as a house-cleaning enzyme that removes non-canonical purine nucleotides from the nucleotide pool, thus preventing their incorporation into DNA/RNA and avoiding chromosomal lesions. The sequence is that of dITP/XTP pyrophosphatase from Paracidovorax citrulli (strain AAC00-1) (Acidovorax citrulli).